Reading from the N-terminus, the 283-residue chain is tRNA pseudouridine synthase B (283 aa).

The active-site Nucleophile is aspartate 38.

The protein belongs to the pseudouridine synthase TruB family. Type 1 subfamily.

It catalyses the reaction uridine(55) in tRNA = pseudouridine(55) in tRNA. In terms of biological role, responsible for synthesis of pseudouridine from uracil-55 in the psi GC loop of transfer RNAs. This Onion yellows phytoplasma (strain OY-M) protein is tRNA pseudouridine synthase B.